Reading from the N-terminus, the 387-residue chain is 8-amino-7-oxononanoate synthase (387 aa).

Arginine 19 contributes to the substrate binding site. Residue 106–107 coordinates pyridoxal 5'-phosphate; that stretch reads GY. Histidine 131 lines the substrate pocket. Residues serine 177, histidine 205, and threonine 236 each coordinate pyridoxal 5'-phosphate. Residue lysine 239 is modified to N6-(pyridoxal phosphate)lysine. Position 353 (threonine 353) interacts with substrate.

This sequence belongs to the class-II pyridoxal-phosphate-dependent aminotransferase family. BioF subfamily. Homodimer. It depends on pyridoxal 5'-phosphate as a cofactor.

The catalysed reaction is 6-carboxyhexanoyl-[ACP] + L-alanine + H(+) = (8S)-8-amino-7-oxononanoate + holo-[ACP] + CO2. Its pathway is cofactor biosynthesis; biotin biosynthesis. Functionally, catalyzes the decarboxylative condensation of pimeloyl-[acyl-carrier protein] and L-alanine to produce 8-amino-7-oxononanoate (AON), [acyl-carrier protein], and carbon dioxide. This is 8-amino-7-oxononanoate synthase from Nitrosomonas eutropha (strain DSM 101675 / C91 / Nm57).